The primary structure comprises 74 residues: MKLTCVVIVAVLFLTACQLITAETYSRGEQKHRALSSTDKNSKLTRTCNTPTQYCTLHRHCCSLYCHKTIHACA.

A signal peptide spans 1–22 (MKLTCVVIVAVLFLTACQLITA). The propeptide occupies 23–46 (ETYSRGEQKHRALSSTDKNSKLTR). Disulfide bonds link Cys-48–Cys-62, Cys-55–Cys-66, and Cys-61–Cys-73.

Belongs to the conotoxin O1 superfamily. Expressed by the venom duct.

It is found in the secreted. Functionally, omega-conotoxins act at presynaptic membranes, they bind and block voltage-gated calcium channels (Cav). This chain is Omega-conotoxin-like PuIIA, found in Conus pulicarius (Flea-bitten cone).